A 229-amino-acid chain; its full sequence is Large ribosomal subunit protein uL1 (229 aa).

Belongs to the universal ribosomal protein uL1 family. In terms of assembly, part of the 50S ribosomal subunit.

Functionally, binds directly to 23S rRNA. The L1 stalk is quite mobile in the ribosome, and is involved in E site tRNA release. Its function is as follows. Protein L1 is also a translational repressor protein, it controls the translation of the L11 operon by binding to its mRNA. In Haemophilus ducreyi (strain 35000HP / ATCC 700724), this protein is Large ribosomal subunit protein uL1.